Consider the following 485-residue polypeptide: Trigger factor (485 aa).

The 93-residue stretch at Gly169–Pro261 folds into the PPIase FKBP-type domain.

This sequence belongs to the FKBP-type PPIase family. Tig subfamily.

Its subcellular location is the cytoplasm. It catalyses the reaction [protein]-peptidylproline (omega=180) = [protein]-peptidylproline (omega=0). Functionally, involved in protein export. Acts as a chaperone by maintaining the newly synthesized protein in an open conformation. Functions as a peptidyl-prolyl cis-trans isomerase. The sequence is that of Trigger factor from Trichodesmium erythraeum (strain IMS101).